The sequence spans 111 residues: Rubredoxin (111 aa).

The region spanning 11–62 (LDRFECRSCGYVYEPEKGDSKHDIAPETPFAELPINWRCPVCTAKKAAFSNI) is the Rubredoxin-like domain. Positions 16, 19, 49, and 52 each coordinate Fe cation.

It belongs to the rubredoxin family. Fe(3+) is required as a cofactor.

In terms of biological role, rubredoxin is a small nonheme, iron protein lacking acid-labile sulfide. Its single Fe, chelated to 4 Cys, functions as an electron acceptor and may also stabilize the conformation of the molecule. Could be involved in hydrogenase-linked redox processes. The chain is Rubredoxin (rub) from Trichormus variabilis (strain ATCC 29413 / PCC 7937) (Anabaena variabilis).